Consider the following 1773-residue polypeptide: Disco-interacting protein 2 (1773 aa).

One can recognise a DMAP1-binding domain in the interval 3–110; it reads HTASLPGYVR…QRHSKKIDFH (108 aa). A phosphotyrosine mark is found at Tyr60 and Tyr61. Disordered stretches follow at residues 112 to 185 and 198 to 319; these read QAAM…YHSE and LKGR…PLSS. Polar residues-rich tracts occupy residues 113-125 and 146-165; these read AAMS…QSGN and YQNT…NNSQ. A compositionally biased stretch (basic residues) spans 166–175; sequence HRQRRTQRKV. Over residues 176–185 the composition is skewed to basic and acidic residues; the sequence is THNEKRYHSE. Acidic residues predominate over residues 224–236; it reads DELDSSTDDESIP. Basic and acidic residues predominate over residues 241 to 253; that stretch reads SPDKEYNYPRDHI. A compositionally biased stretch (polar residues) spans 272–297; it reads SMGSQQHARTDVKQNQITNQKYTAPN.

This sequence belongs to the DIP2 family. In terms of assembly, interacts with Disco. As to expression, expressed in the developing nervous system. Ubiquitously expressed in the developing brain. Within the mushroom body, a higher level is detected in the core of lobes and peduncle in the late third instar larva. Detected in whole mushroom body neuron structures at 48 hours after puparium formation and during later stages.

The protein localises to the cell membrane. Functionally, required for precise axonal bifurcation in mushroom body neurons by suppressing ectopic bifurcation and regulating the guidance of sister axons. May function by regulating expression of tdp1. Acts downstream of the serine/threonine-protein kinase Bsk to modulate the direction of axon projection. May play a role in fatty acid metabolism. The sequence is that of Disco-interacting protein 2 from Drosophila melanogaster (Fruit fly).